The primary structure comprises 462 residues: tRNA modification GTPase MnmE (462 aa).

Residues arginine 27, glutamate 89, and arginine 128 each coordinate (6S)-5-formyl-5,6,7,8-tetrahydrofolate. A TrmE-type G domain is found at 224-383; the sequence is GLATAIVGRP…LDERIAKLFF (160 aa). Asparagine 234 is a binding site for K(+). Residues 234 to 239, 253 to 259, and 278 to 281 contribute to the GTP site; these read NVGKSS, TDVAGTT, and DTAG. Serine 238 is a Mg(2+) binding site. K(+)-binding residues include threonine 253, valine 255, and threonine 258. Threonine 259 is a binding site for Mg(2+). Lysine 462 provides a ligand contact to (6S)-5-formyl-5,6,7,8-tetrahydrofolate.

It belongs to the TRAFAC class TrmE-Era-EngA-EngB-Septin-like GTPase superfamily. TrmE GTPase family. As to quaternary structure, homodimer. Heterotetramer of two MnmE and two MnmG subunits. The cofactor is K(+).

The protein localises to the cytoplasm. Functionally, exhibits a very high intrinsic GTPase hydrolysis rate. Involved in the addition of a carboxymethylaminomethyl (cmnm) group at the wobble position (U34) of certain tRNAs, forming tRNA-cmnm(5)s(2)U34. The protein is tRNA modification GTPase MnmE of Lacticaseibacillus paracasei (strain ATCC 334 / BCRC 17002 / CCUG 31169 / CIP 107868 / KCTC 3260 / NRRL B-441) (Lactobacillus paracasei).